Reading from the N-terminus, the 175-residue chain is dATP triphosphohydrolase (175 aa).

Arg-19 is a dATP binding site. Residues His-34, His-66, Asp-67, Glu-70, Asp-75, and Asp-119 each coordinate Co(2+).

It belongs to the Caudovirales dATP triphosphohydrolase family. In terms of assembly, homohexamer. Co(2+) is required as a cofactor. It depends on Zn(2+) as a cofactor.

The enzyme catalyses dATP + H2O = 2'-deoxyadenosine + triphosphate + H(+). The catalysed reaction is dADP + H2O = 2'-deoxyadenosine + diphosphate. It carries out the reaction dAMP + H2O = 2'-deoxyadenosine + phosphate. Its function is as follows. Catalyzes the hydrolysis of dATP, dADP and dAMP into dA. This step is essential for Z-genome synthesis (containing aminoadenine instead of adenine). Specifically removes dATP and its precursor dADP from the nucleotide pool of the host, preventing the incorporation of A into the phage genome and favoring the integration of the Z-base into the viral genome. In Cyanophage S-2L (Cyanobacteria phage S-2L), this protein is dATP triphosphohydrolase (datZ).